Reading from the N-terminus, the 93-residue chain is Integration host factor subunit beta (93 aa).

This sequence belongs to the bacterial histone-like protein family. Heterodimer of an alpha and a beta chain.

Functionally, this protein is one of the two subunits of integration host factor, a specific DNA-binding protein that functions in genetic recombination as well as in transcriptional and translational control. This chain is Integration host factor subunit beta, found in Aliivibrio salmonicida (strain LFI1238) (Vibrio salmonicida (strain LFI1238)).